We begin with the raw amino-acid sequence, 142 residues long: Large ribosomal subunit protein uL13 (142 aa).

It belongs to the universal ribosomal protein uL13 family. In terms of assembly, part of the 50S ribosomal subunit.

This protein is one of the early assembly proteins of the 50S ribosomal subunit, although it is not seen to bind rRNA by itself. It is important during the early stages of 50S assembly. In Aeromonas hydrophila subsp. hydrophila (strain ATCC 7966 / DSM 30187 / BCRC 13018 / CCUG 14551 / JCM 1027 / KCTC 2358 / NCIMB 9240 / NCTC 8049), this protein is Large ribosomal subunit protein uL13.